The chain runs to 1287 residues: DNA-directed RNA polymerase subunit beta (1287 aa).

Belongs to the RNA polymerase beta chain family. The RNAP catalytic core consists of 2 alpha, 1 beta, 1 beta' and 1 omega subunit. When a sigma factor is associated with the core the holoenzyme is formed, which can initiate transcription.

The catalysed reaction is RNA(n) + a ribonucleoside 5'-triphosphate = RNA(n+1) + diphosphate. Functionally, DNA-dependent RNA polymerase catalyzes the transcription of DNA into RNA using the four ribonucleoside triphosphates as substrates. This chain is DNA-directed RNA polymerase subunit beta, found in Mycoplasma capricolum subsp. capricolum (strain California kid / ATCC 27343 / NCTC 10154).